A 194-amino-acid polypeptide reads, in one-letter code: Ribonuclease HII (194 aa).

The 191-residue stretch at 3–193 (ILTAGVDEAG…VRNLLAQQAL (191 aa)) folds into the RNase H type-2 domain. 3 residues coordinate a divalent metal cation: Asp-9, Glu-10, and Asp-101.

Belongs to the RNase HII family. Mn(2+) is required as a cofactor. Requires Mg(2+) as cofactor.

Its subcellular location is the cytoplasm. It catalyses the reaction Endonucleolytic cleavage to 5'-phosphomonoester.. Endonuclease that specifically degrades the RNA of RNA-DNA hybrids. The chain is Ribonuclease HII (rnhB) from Neisseria meningitidis serogroup B (strain ATCC BAA-335 / MC58).